A 247-amino-acid polypeptide reads, in one-letter code: tRNA (guanine-N(1)-)-methyltransferase (247 aa).

S-adenosyl-L-methionine contacts are provided by residues glycine 115 and 134 to 139 (IGDFVL).

This sequence belongs to the RNA methyltransferase TrmD family. In terms of assembly, homodimer.

The protein resides in the cytoplasm. It carries out the reaction guanosine(37) in tRNA + S-adenosyl-L-methionine = N(1)-methylguanosine(37) in tRNA + S-adenosyl-L-homocysteine + H(+). Functionally, specifically methylates guanosine-37 in various tRNAs. This Anaeromyxobacter dehalogenans (strain 2CP-C) protein is tRNA (guanine-N(1)-)-methyltransferase.